The following is a 771-amino-acid chain: DNA polymerase 1 (771 aa).

Belongs to the DNA polymerase type-B family.

It carries out the reaction DNA(n) + a 2'-deoxyribonucleoside 5'-triphosphate = DNA(n+1) + diphosphate. In Pyrococcus abyssi (strain GE5 / Orsay), this protein is DNA polymerase 1 (polI).